The following is a 334-amino-acid chain: Ketol-acid reductoisomerase (NADP(+)) (334 aa).

The KARI N-terminal Rossmann domain maps to 2–181 (TKVYYDETVT…GATRAGVIET (180 aa)). Residues 25–28 (YGSQ), Arg-48, Ser-52, and 82–85 (DEIQ) contribute to the NADP(+) site. His-107 is a catalytic residue. Gly-133 provides a ligand contact to NADP(+). One can recognise a KARI C-terminal knotted domain in the interval 182–327 (TFKEETETDL…RELREMMPFI (146 aa)). 4 residues coordinate Mg(2+): Asp-190, Glu-194, Glu-226, and Glu-230. Ser-251 is a binding site for substrate.

The protein belongs to the ketol-acid reductoisomerase family. Mg(2+) is required as a cofactor.

The enzyme catalyses (2R)-2,3-dihydroxy-3-methylbutanoate + NADP(+) = (2S)-2-acetolactate + NADPH + H(+). The catalysed reaction is (2R,3R)-2,3-dihydroxy-3-methylpentanoate + NADP(+) = (S)-2-ethyl-2-hydroxy-3-oxobutanoate + NADPH + H(+). Its pathway is amino-acid biosynthesis; L-isoleucine biosynthesis; L-isoleucine from 2-oxobutanoate: step 2/4. It participates in amino-acid biosynthesis; L-valine biosynthesis; L-valine from pyruvate: step 2/4. Functionally, involved in the biosynthesis of branched-chain amino acids (BCAA). Catalyzes an alkyl-migration followed by a ketol-acid reduction of (S)-2-acetolactate (S2AL) to yield (R)-2,3-dihydroxy-isovalerate. In the isomerase reaction, S2AL is rearranged via a Mg-dependent methyl migration to produce 3-hydroxy-3-methyl-2-ketobutyrate (HMKB). In the reductase reaction, this 2-ketoacid undergoes a metal-dependent reduction by NADPH to yield (R)-2,3-dihydroxy-isovalerate. The polypeptide is Ketol-acid reductoisomerase (NADP(+)) (Staphylococcus epidermidis (strain ATCC 35984 / DSM 28319 / BCRC 17069 / CCUG 31568 / BM 3577 / RP62A)).